A 37-amino-acid polypeptide reads, in one-letter code: Hemextin B (37 aa).

Heterotetramer composed of 2 hemextin A and 2 hemextin B chains; non-covalently linked. Does not exist as a complex in the crude venom. In terms of processing, may contain several disulfide bonds. In terms of tissue distribution, expressed by the venom gland.

It localises to the secreted. In terms of biological role, hemextin B (monomer): does not show anticoagulant activity. Seems only to synergitically enhance hemextin A activity. Its function is as follows. Hemextin AB complex: specifically inhibits the activation of FX (F10) by the TF-FVIIa complex (extrinsic tenase complex (ETC)) (IC(50)= 100 nM, Ki=50 nM) by non-competitively inhibiting the enzymatic activity of FVIIa. The polypeptide is Hemextin B (Hemachatus haemachatus (Rinkhals)).